Here is a 564-residue protein sequence, read N- to C-terminus: Phenylalanine--tRNA ligase beta subunit (564 aa).

Residues tyrosine 286 to proline 362 form the B5 domain. Mg(2+) contacts are provided by aspartate 340, aspartate 346, glutamate 349, and glutamate 350.

It belongs to the phenylalanyl-tRNA synthetase beta subunit family. Type 2 subfamily. As to quaternary structure, tetramer of two alpha and two beta subunits. Mg(2+) is required as a cofactor.

It is found in the cytoplasm. It catalyses the reaction tRNA(Phe) + L-phenylalanine + ATP = L-phenylalanyl-tRNA(Phe) + AMP + diphosphate + H(+). The chain is Phenylalanine--tRNA ligase beta subunit from Borrelia hermsii (strain HS1 / DAH).